Here is a 334-residue protein sequence, read N- to C-terminus: N-acetyl-gamma-glutamyl-phosphate reductase (334 aa).

Cys-154 is a catalytic residue.

Belongs to the NAGSA dehydrogenase family. Type 1 subfamily.

The protein localises to the cytoplasm. It carries out the reaction N-acetyl-L-glutamate 5-semialdehyde + phosphate + NADP(+) = N-acetyl-L-glutamyl 5-phosphate + NADPH + H(+). Its pathway is amino-acid biosynthesis; L-arginine biosynthesis; N(2)-acetyl-L-ornithine from L-glutamate: step 3/4. Catalyzes the NADPH-dependent reduction of N-acetyl-5-glutamyl phosphate to yield N-acetyl-L-glutamate 5-semialdehyde. In Salmonella typhi, this protein is N-acetyl-gamma-glutamyl-phosphate reductase.